Reading from the N-terminus, the 164-residue chain is FMN reductase (NADH) RutF (164 aa).

This sequence belongs to the non-flavoprotein flavin reductase family. RutF subfamily.

The catalysed reaction is FMNH2 + NAD(+) = FMN + NADH + 2 H(+). Functionally, catalyzes the reduction of FMN to FMNH2 which is used to reduce pyrimidine by RutA via the Rut pathway. The chain is FMN reductase (NADH) RutF from Escherichia coli O150:H5 (strain SE15).